A 106-amino-acid polypeptide reads, in one-letter code: 3-oxoacyl-[acyl-carrier-protein] reductase (106 aa).

Belongs to the short-chain dehydrogenases/reductases (SDR) family. Homotetramer. As to expression, mesocarp.

The protein resides in the plastid. It localises to the chloroplast. The enzyme catalyses a (3R)-hydroxyacyl-[ACP] + NADP(+) = a 3-oxoacyl-[ACP] + NADPH + H(+). It participates in lipid metabolism; fatty acid biosynthesis. This chain is 3-oxoacyl-[acyl-carrier-protein] reductase, found in Persea americana (Avocado).